A 269-amino-acid polypeptide reads, in one-letter code: Chymotrypsin-like elastase family member 2A (269 aa).

Positions 1-16 (MIRALLLSTLVAGALS) are cleaved as a signal peptide. Positions 17–28 (CGLPANLPQLPR) are cleaved as a propeptide — activation peptide. The 239-residue stretch at 29-267 (VVGGEDARPN…YIDWINSVIA (239 aa)) folds into the Peptidase S1 domain. C58 and C74 are joined by a disulfide. Catalysis depends on charge relay system residues H73 and D121. Intrachain disulfides connect C155-C222, C186-C202, and C212-C243. The active-site Charge relay system is the S216.

It belongs to the peptidase S1 family. Elastase subfamily. In terms of assembly, interacts with CPA1. Interacts with SERPINA1. Pancreas.

The protein localises to the secreted. It catalyses the reaction Preferential cleavage: Leu-|-Xaa, Met-|-Xaa and Phe-|-Xaa. Hydrolyzes elastin.. In terms of biological role, elastase that enhances insulin signaling and might have a physiologic role in cellular glucose metabolism. Circulates in plasma and reduces platelet hyperactivation, triggers both insulin secretion and degradation, and increases insulin sensitivity. The chain is Chymotrypsin-like elastase family member 2A (CELA2A) from Sus scrofa (Pig).